Consider the following 436-residue polypeptide: Trigger factor (436 aa).

In terms of domain architecture, PPIase FKBP-type spans 161 to 246 (EDQLNIDFVG…VNTVSEPKLP (86 aa)).

This sequence belongs to the FKBP-type PPIase family. Tig subfamily.

It is found in the cytoplasm. The enzyme catalyses [protein]-peptidylproline (omega=180) = [protein]-peptidylproline (omega=0). Involved in protein export. Acts as a chaperone by maintaining the newly synthesized protein in an open conformation. Functions as a peptidyl-prolyl cis-trans isomerase. This chain is Trigger factor, found in Pseudomonas fluorescens (strain Pf0-1).